The following is a 501-amino-acid chain: TNF receptor-associated factor 2 (501 aa).

Position 2 is an N-acetylalanine (alanine 2). The residue at position 5 (serine 5) is a Phosphoserine. Threonine 7 is subject to Phosphothreonine. A Phosphoserine modification is found at serine 11. Phosphothreonine is present on threonine 22. Residue lysine 31 forms a Glycyl lysine isopeptide (Lys-Gly) (interchain with G-Cter in ubiquitin) linkage. The RING-type zinc-finger motif lies at 34-73; sequence CSACRNVLRRPFQAQCGHRYCSFCLASILSSGPQNCAACV. Threonine 117 carries the post-translational modification Phosphothreonine; by PKC. 2 consecutive TRAF-type zinc fingers follow at residues 124–180 and 177–233; these read CHEG…AHHE and AHHE…EKQQ. Positions 283–293 are important for interaction with BIRC2 and BIRC3; the sequence is ENIVCVLNREV. The stretch at 299-348 forms a coiled coil; it reads TAEACSRQHRLDQDKIEALSSKVQQLERSIGLKDLAMADLEQKVLEMEAS. Lysine 320 participates in a covalent cross-link: Glycyl lysine isopeptide (Lys-Gly) (interchain with G-Cter in ubiquitin). The MATH domain occupies 351 to 496; that stretch reads DGVFIWKISD…DDAIFIKAIV (146 aa).

Belongs to the TNF receptor-associated factor family. A subfamily. Homotrimer. Heterotrimer with TRAF1. Heterotrimer with TRAF3 (via TRAF domain). The domain containing the RING-type and the first TRAF-type zinc finger can also form homodimers (in vitro). Interacts with TNFRSF1B/TNFR2. Interacts with TNFRSF5/CD40. Interacts with TNFRSF4, TNFRSF7/CD27, TNFRSF8/CD30, TNFRSF9/CD137, TNFRSF11A/RANK, TNFRSF13B/TACI, TNFRSF14, TNFRSF16/NGFR, TNFRSF17/BCMA, TNFRSF18/AITR, TNFRSF19/TROY, TNFRSF19L/RELT and EDAR. Stimulation of TNF-alpha receptor TNFRSF1A leads to the formation of two distinct signaling complexes. Plasma membrane-bound complex I is composed of TNFRSF1A, TRADD, RIPK1, TRAF2 and BIRC2/c-IAP1 or BIRC3 which interacts with CHUCK/IKK-alpha, IKBKB/IKK-beta and IKBKG/IKK-gamma promoting cell survival. Subsequently, TRADD, RIPK1 and TRAF2 dissociate from TNFRSF1A and form cytoplasmic complex II with FADD and caspase CASP8 promoting cell apoptosis. Interacts with TRADD. Identified in a complex with TNFRSF1A, RIPK1 and IKBKB/IKK-beta. Interacts with RIPK2. Interacts with BIRC2 and BIRC3 N-terminus; a single BIRC2 or BIRC3 molecule interacts with a heterotrimer formed by TRAF1 and TRAF2, or a TRAF2 homotrimer. Identified in a complex composed of TRAF2, TRAF3, BIRC2 and BIRC3. Interacts with BIRC2; the interaction promotes BIRC2 stability. Interaction with BIRC2 and/or BIRC3 is essential for ubiquitination of IKBKE, degradation of NFKBIA and activation of NF-kappa-B. Within complex I, phosphorylated TRAF2 interacts (via 'Lys-63'-linked polyubiquitin chains) with CHUCK/IKK-alpha, IKBKB/IKK-beta, IKBKG/IKK-gamma TAB2, TAB3 and TAK1 in response to TNF-alpha stimulation. Within complex I, interacts with UXT isoform 1 (via TPQE motif); the interaction prevents the recruitment of FADD and CASP8/caspase 8 to complex I. Forms a complex composed of TNFRSF8/CD30 or TNFRSF1B/TNFR2, and TRAF1, TRAF2 and E3 ligase TRAIP. Within the complex, interacts with TRAIP; the interaction inhibits TRAF2-mediated NF-kappa B activation. Component of a complex composed of TANK and TBK1. Interacts with TRPC4AP. Interacts with MAP3K1/MEKK1, MAP3K5/ASK1 and MAP3K11/MLK3 in response to TNF-alpha stimulation; the interaction leads to JNK activation and interaction with MAP3K5 is inhibited by PRMT1. Component of a complex composed of MAP3K14/NIK BIRC3 and TRAF3; the interaction leads to BIRC2/3-mediated ubiquitination of TRAF3 upon CD40 engagement in a TRAF2-dependent manner. Interacts with MAP3K14/NIK in response to TNF-alpha stimulation; the interaction leads to NF-kappa B activation. Interacts with PEG3; the interaction may promote TRAF2-mediated NF-kappa B activation. Interacts with HIVEP3; the interaction may inhibit TNF-alpha-TRAF2-mediated NF-kappa B and JNK activation. Interacts with TANK/ITRAF; the interaction prevents interaction between TNFRSF1B/TNFR2 and TRAF2. Interacts with deubiquitinating enzyme CYLD; the interaction results in the deubiquitination and inactivation of TRAF2. Interacts with SIAH2; the interaction leads to TRAF2 ubiquitination and degradation. Interacts with E2 conjugating enzyme UBE2N/Ubc13, E3 ligase ITCH and RNF11 in response to TNF-alpha stimulation. Interacts with ubiquitin-editing enzyme TNFAIP3/A20 in response to TNF-alpha stimulation; the interaction promotes TRAF2 dissociation from UBE2N/Ubc13, ITCH, RNF11 and TAX1BP1 and prevents prolonged TRAF-2 ubiquitination. Interacts with TAX1BP1 in response to TNF-alpha stimulation; the interaction promotes TRAF2 dissociation from UBE2N/Ubc13 and TNFAIP3/A20, and prevents prolonged TRAF-2 ubiquitination. Interacts (via C-terminus) with EIF2AK2/PKR (via the kinase catalytic domain). Interacts with deubiquitinating enzyme USP48. Interacts with PTPN2; probably involved in TNF-mediated signaling. Interacts with Toll-like receptor TLR4/3 adapter TICAM1/TRIF; the interaction may promote TICAM1 ubiquitination. Interacts with kinase/endoribonuclease ERN1/IRE1 and DAB2IP in response to ER stress; the interaction requires DAB2IP. Interacts with ERN1/IRE1 and TAOK3 in response to ER stress; the interaction may promote TRAF2 phosphorylation. Interacts (via zinc fingers) with DAB2IP (via C-terminus PER domain)in response to TNF-alpha stimulation. Interacts with CASP8AP2/FLASH. Interacts with NFATC2IP; the interaction may repress IL-4 production in T cells. Interacts with kinase CDK9. Interacts with sphingosine kinase 1 SPHK1. Interacts with kinase TNIK. Interacts with TRAFD1. Interacts with DNA phosphodiesterase TDP2. Interacts with MAVS/IPS1. Interacts with CARD14. Interacts with Epstein-Barr virus LMP1/BNFL1. Interacts with GPS2. Interacts with XPNPEP3. Interacts with RIPK3. Interacts with RELL2. Interacts with LRRC19. Interacts with GAPDH; promoting TRAF2 ubiquitination. Phosphorylated at several serine residues within the first 128 amino acid residues. Phosphorylated at Thr-117 in response to signaling via TNF and TNFRSF1A. Phosphorylation at Thr-117 is required for 'Lys-63'-linked polyubiquitination, but not for 'Lys-48'-linked polyubiquitination. Phosphorylation at Thr-117 is important for interaction with IKKA and IKKB, activation of IKK and subsequent activation of NF-kappa-B. Post-translationally, undergoes both 'Lys-48'-linked and 'Lys-63'-linked polyubiquitination. Polyubiquitinated via 'Lys-63'-linked ubiquitin in response to TNF signaling; this requires prior phosphorylation at Thr-117. 'Lys-63'-linked polyubiquitination promotes TRAF2-mediated activation of NF-kappa-B. Can be polyubiquitinated at several Lys residues via 'Lys-48'-linked ubiquitin chains in response to TNF signaling, leading to proteasomal degradation. Autoubiquitinated, leading to its subsequent proteasomal degradation. Polyubiquitinated by BIRC2 and SIAH2, leading to its subsequent proteasomal degradation. Deubiquitinated by CYLD, a protease that specifically cleaves 'Lys-63'-linked polyubiquitin chains. Ubiquination is inhibited by LRRC19; inhibits proteasomal degradation. Ubiquitinated at Lys-320 by the SCF(FBXL2) complex, leading to its degradation by the proteasome. Ubiquitinated by E3 ubiquitin-protein ligase complex containing FBXO7; leading to repression of NF-kappa-B signaling.

The protein resides in the cytoplasm. It carries out the reaction S-ubiquitinyl-[E2 ubiquitin-conjugating enzyme]-L-cysteine + [acceptor protein]-L-lysine = [E2 ubiquitin-conjugating enzyme]-L-cysteine + N(6)-ubiquitinyl-[acceptor protein]-L-lysine.. Its pathway is protein modification; protein ubiquitination. With respect to regulation, has very low E3 ubiquitin ligase activity in the absence of sphingosine-1-phosphate. E3 ubiquitin ligase activity is strongly activated by cytoplasmic sphingosine-1-phosphate. E3 ubiquitin-protein ligase that regulates activation of NF-kappa-B and JNK and plays a central role in the regulation of cell survival and apoptosis. Catalyzes 'Lys-63'-linked ubiquitination of target proteins, such as BIRC3, IKBKE, MLST8, RIPK1 and TICAM1. Is an essential constituent of several E3 ubiquitin-protein ligase complexes, where it promotes the ubiquitination of target proteins by bringing them into contact with other E3 ubiquitin ligases. Regulates BIRC2 and BIRC3 protein levels by inhibiting their autoubiquitination and subsequent degradation; this does not depend on the TRAF2 RING-type zinc finger domain. Plays a role in mediating activation of NF-kappa-B by EIF2AK2/PKR. In complex with BIRC2 or BIRC3, promotes ubiquitination of IKBKE. Acts as a regulator of mTORC1 and mTORC2 assembly by mediating 'Lys-63'-linked ubiquitination of MLST8, thereby inhibiting formation of the mTORC2 complex, while facilitating assembly of the mTORC1 complex. Required for normal antibody isotype switching from IgM to IgG. This chain is TNF receptor-associated factor 2, found in Homo sapiens (Human).